Reading from the N-terminus, the 360-residue chain is Aurora kinase B (360 aa).

Positions 93–343 (FDIGRPLGKG…LKGVMEHPWV (251 aa)) constitute a Protein kinase domain. ATP is bound by residues 99–107 (LGKGKFGNV) and Lys122. Catalysis depends on Asp216, which acts as the Proton acceptor.

Belongs to the protein kinase superfamily. Ser/Thr protein kinase family. Aurora subfamily. Component of the chromosomal passenger complex (CPC).

The protein resides in the nucleus. The protein localises to the chromosome. Its subcellular location is the centromere. It is found in the cytoplasm. It localises to the cytoskeleton. The protein resides in the spindle. The protein localises to the midbody. It catalyses the reaction L-seryl-[protein] + ATP = O-phospho-L-seryl-[protein] + ADP + H(+). The catalysed reaction is L-threonyl-[protein] + ATP = O-phospho-L-threonyl-[protein] + ADP + H(+). Kinase activity is stimulated by cell-cycle specific phosphorylation. In terms of biological role, serine/threonine-protein kinase component of the chromosomal passenger complex (CPC), a complex that acts as a key regulator of mitosis. The CPC complex has essential functions at the centromere in ensuring correct chromosome alignment and segregation and is required for chromatin-induced microtubule stabilization and spindle assembly. Involved in the bipolar attachment of spindle microtubules to kinetochores and is a key regulator for the onset of cytokinesis during mitosis. Required for central/midzone spindle assembly and cleavage furrow formation. Key component of the cytokinesis checkpoint, a process required to delay abscission to prevent both premature resolution of intercellular chromosome bridges and accumulation of DNA damage. Phosphorylates 'Ser-10' of histone H3 during mitosis. This Xenopus tropicalis (Western clawed frog) protein is Aurora kinase B.